The primary structure comprises 305 residues: Transmembrane epididymal protein 1A (305 aa).

A helical transmembrane segment spans residues 4–24 (FIGHISPGLFLVFYGLYQAVI). A glycan (N-linked (GlcNAc...) asparagine) is linked at N32. 5 helical membrane-spanning segments follow: residues 54–74 (IAHAGWLKVVIGSLLIVYEIS), 124–144 (CVLLERGATVLGVYVLLLLLV), 159–179 (SLLILVVFLLMLVLTAELWAP), 187–207 (IETFLILIMGSWLIQAAFILF), and 223–243 (IMFVTTFFCWHVMINALCMLG). A disordered region spans residues 285-305 (EQQDKDDQAPLLSKISPCDRA).

Belongs to the TMEM45 family.

It localises to the membrane. This chain is Transmembrane epididymal protein 1A, found in Mus musculus (Mouse).